Reading from the N-terminus, the 189-residue chain is GTPase NRas (189 aa).

10–17 (GAGGVGKS) contacts GTP. The short motif at 32 to 40 (YDPTIEDSY) is the Effector region element. Residues 57–61 (DTAGQ) and 116–119 (NKCD) each bind GTP. Residues 166–185 (YRMKKLDSSEDNNQGCIRIP) are hypervariable region. A lipid anchor (S-palmitoyl cysteine) is attached at C181. Residue C186 is the site of S-farnesyl cysteine attachment. A propeptide spans 187-189 (KLM) (removed in mature form).

This sequence belongs to the small GTPase superfamily. Ras family. Palmitoylated by the ZDHHC9-GOLGA7 complex. Depalmitoylated by abhd17a, abhd17b and abhd17c. A continuous cycle of de- and re-palmitoylation regulates rapid exchange between plasma membrane and Golgi.

Its subcellular location is the cell membrane. It localises to the golgi apparatus membrane. The catalysed reaction is GTP + H2O = GDP + phosphate + H(+). With respect to regulation, alternates between an inactive form bound to GDP and an active form bound to GTP. Activated by a guanine nucleotide-exchange factor (GEF) and inactivated by a GTPase-activating protein (GAP). Its function is as follows. Ras proteins bind GDP/GTP and possess intrinsic GTPase activity. This chain is GTPase NRas (nras), found in Xenopus laevis (African clawed frog).